Reading from the N-terminus, the 258-residue chain is Small ribosomal subunit protein uS2 (258 aa).

The protein belongs to the universal ribosomal protein uS2 family.

The chain is Small ribosomal subunit protein uS2 from Granulibacter bethesdensis (strain ATCC BAA-1260 / CGDNIH1).